The chain runs to 351 residues: uncharacterized protein (351 aa).

Positions 1–27 (MKNKKRVLIASSLSCAILLLSAATTQA) are cleaved as a signal peptide. Positions 28 to 71 (NSAHKDSQDQNKKEHVDKSQQKDKRNVTNKDKNSTVPDDIGKNG) are disordered. The span at 30-60 (AHKDSQDQNKKEHVDKSQQKDKRNVTNKDKN) shows a compositional bias: basic and acidic residues.

It belongs to the aerolysin family.

This is an uncharacterized protein from Staphylococcus aureus (strain N315).